A 230-amino-acid polypeptide reads, in one-letter code: Probable caffeoyl-CoA O-methyltransferase 1 (230 aa).

S-adenosyl-L-methionine contacts are provided by residues Thr-52, Asp-74, 76–77 (GV), Ser-82, Asp-100, Ala-129, Asp-151, Asp-153, and Tyr-160. Asp-151 provides a ligand contact to a divalent metal cation. A divalent metal cation-binding residues include Asp-177 and Asn-178.

The protein belongs to the class I-like SAM-binding methyltransferase superfamily. Cation-dependent O-methyltransferase family. CCoAMT subfamily.

The enzyme catalyses (E)-caffeoyl-CoA + S-adenosyl-L-methionine = (E)-feruloyl-CoA + S-adenosyl-L-homocysteine + H(+). The sequence is that of Probable caffeoyl-CoA O-methyltransferase 1 (omt5) from Dictyostelium discoideum (Social amoeba).